The sequence spans 367 residues: Germination protease (367 aa).

Residues 1-15 (MKEPLDLSKYSVRTD) constitute a propeptide that is removed on maturation.

Belongs to the peptidase A25 family. As to quaternary structure, homotetramer. In terms of processing, autoproteolytically processed. The inactive tetrameric zymogen termed p46 autoprocesses to a smaller form termed p41, which is active only during spore germination.

The enzyme catalyses Endopeptidase action with P4 Glu or Asp, P1 preferably Glu &gt; Asp, P1' hydrophobic and P2' Ala.. Initiates the rapid degradation of small, acid-soluble proteins during spore germination. The chain is Germination protease from Bacillus cereus (strain G9842).